A 407-amino-acid polypeptide reads, in one-letter code: S-adenosylmethionine synthase (407 aa).

Residue histidine 19 participates in ATP binding. Position 21 (aspartate 21) interacts with Mg(2+). Residue glutamate 47 participates in K(+) binding. Residues glutamate 60 and glutamine 103 each contribute to the L-methionine site. A flexible loop region spans residues 103–113 (QSQEIADGVDN). Residues 107-134 (IADGVDNSDEARTNGDVEEDDRAGAGDQ) form a disordered region. ATP-binding positions include 178-180 (DGK), aspartate 258, 264-265 (RK), alanine 281, and lysine 285. Residue aspartate 258 participates in L-methionine binding. L-methionine is bound at residue lysine 289.

The protein belongs to the AdoMet synthase family. As to quaternary structure, homotetramer; dimer of dimers. Mg(2+) serves as cofactor. K(+) is required as a cofactor.

The protein resides in the cytoplasm. It carries out the reaction L-methionine + ATP + H2O = S-adenosyl-L-methionine + phosphate + diphosphate. Its pathway is amino-acid biosynthesis; S-adenosyl-L-methionine biosynthesis; S-adenosyl-L-methionine from L-methionine: step 1/1. Its function is as follows. Catalyzes the formation of S-adenosylmethionine (AdoMet) from methionine and ATP. The overall synthetic reaction is composed of two sequential steps, AdoMet formation and the subsequent tripolyphosphate hydrolysis which occurs prior to release of AdoMet from the enzyme. This Corynebacterium glutamicum (strain ATCC 13032 / DSM 20300 / JCM 1318 / BCRC 11384 / CCUG 27702 / LMG 3730 / NBRC 12168 / NCIMB 10025 / NRRL B-2784 / 534) protein is S-adenosylmethionine synthase.